The primary structure comprises 563 residues: MTKFVFVTGGVVSSLGKGIAAASLAAILESRGLKVTLIKLDPYLNVDPGTMSPFQHGEVFVTEDGAETDLDLGHYERFITTRMKRSNNFTSGQIYKNVLEKERRGDYLGKTVQVIPHVTNEIQEFVKRGAGIGSHSGDDAKFGVGEPVDVAIVEIGGTVGDIESLPFLEAVRQLSLKMGPTNTAFVHLTYVPFIAAAGELKTKPTQHTVQKMREIGIQPDVLLCRADRPIPDEEREKISLFTNVALHGVISVWDADTIYKVPRMLHEQGLDEMICMKLQLLTKPANLSRWDRLVKEVEHPRREITIAMAGKYTELSDSYKSLNEALRHAGIQHHAKVNIEYVDSETLTPETAGELSKFDAILVPGGFGKRGIEGKIVAAQYAREHGIPYLGICLGMQVATIEYARHKAGLAGANSTEFEPDGPHPVIALIDEWQDADGSIQKRDANSDLGGTMRLGAQSSDVKAGTLAHEIYGDVVTERHRHRYEANQKYLQRLQDAGLVISAITQREKLTEMVELPRSVHPWYVGVQFHPEFKSTPWDGHPLFSSYIAAALEHHAALQKEAA.

Residues 1-280 form an amidoligase domain region; it reads MTKFVFVTGG…DEMICMKLQL (280 aa). Position 13 (serine 13) interacts with CTP. Residue serine 13 coordinates UTP. ATP-binding positions include 14-19 and aspartate 71; that span reads SLGKGI. The Mg(2+) site is built by aspartate 71 and glutamate 154. Residues 161–163, 201–206, and lysine 237 each bind CTP; these read DIE and KTKPTQ. UTP-binding positions include 201 to 206 and lysine 237; that span reads KTKPTQ. A Glutamine amidotransferase type-1 domain is found at 305-557; the sequence is TIAMAGKYTE…IAAALEHHAA (253 aa). An L-glutamine-binding site is contributed by glycine 366. The Nucleophile; for glutamine hydrolysis role is filled by cysteine 393. L-glutamine is bound by residues 394 to 397, glutamate 417, and arginine 483; that span reads LGMQ. Catalysis depends on residues histidine 530 and glutamate 532.

This sequence belongs to the CTP synthase family. As to quaternary structure, homotetramer.

The catalysed reaction is UTP + L-glutamine + ATP + H2O = CTP + L-glutamate + ADP + phosphate + 2 H(+). The enzyme catalyses L-glutamine + H2O = L-glutamate + NH4(+). It catalyses the reaction UTP + NH4(+) + ATP = CTP + ADP + phosphate + 2 H(+). It participates in pyrimidine metabolism; CTP biosynthesis via de novo pathway; CTP from UDP: step 2/2. Its activity is regulated as follows. Allosterically activated by GTP, when glutamine is the substrate; GTP has no effect on the reaction when ammonia is the substrate. The allosteric effector GTP functions by stabilizing the protein conformation that binds the tetrahedral intermediate(s) formed during glutamine hydrolysis. Inhibited by the product CTP, via allosteric rather than competitive inhibition. Catalyzes the ATP-dependent amination of UTP to CTP with either L-glutamine or ammonia as the source of nitrogen. Regulates intracellular CTP levels through interactions with the four ribonucleotide triphosphates. The protein is CTP synthase of Leptothrix cholodnii (strain ATCC 51168 / LMG 8142 / SP-6) (Leptothrix discophora (strain SP-6)).